A 329-amino-acid polypeptide reads, in one-letter code: GTPase Obg (329 aa).

In terms of domain architecture, Obg spans 1-159 (MQFIDEAKIF…MWVWLHLKLL (159 aa)). The OBG-type G domain occupies 160–327 (SDVGLVGLPN…LLANILSELQ (168 aa)). Residues 166–173 (GLPNAGKS), 191–195 (FTTLT), 212–215 (DIPG), 279–282 (TKTD), and 308–310 (SSY) each bind GTP. Mg(2+) contacts are provided by Ser173 and Thr193.

Belongs to the TRAFAC class OBG-HflX-like GTPase superfamily. OBG GTPase family. In terms of assembly, monomer. Mg(2+) is required as a cofactor.

The protein localises to the cytoplasm. Functionally, an essential GTPase which binds GTP, GDP and possibly (p)ppGpp with moderate affinity, with high nucleotide exchange rates and a fairly low GTP hydrolysis rate. Plays a role in control of the cell cycle, stress response, ribosome biogenesis and in those bacteria that undergo differentiation, in morphogenesis control. This chain is GTPase Obg, found in Orientia tsutsugamushi (strain Boryong) (Rickettsia tsutsugamushi).